A 506-amino-acid polypeptide reads, in one-letter code: MILRSSLGRLGVARESPLCLQCLNRSRPSFPAVNKLASISRLQSTVAGQSPSSSVNKTYFSSHKGDSHLTPQPSLFTSLSPSNSPSQLNRGHSTPSTSPELSELPHRRRKRLKEAAAQNNGAEPVIPPDASAQLSNFSSTLPKTSLRRKLAAFFALTKPRLSFLVLLSTTSAYGIYPVSSILALDPTIAPLPTLSTSTLTFLYLTTGTFLSACSANTLNMIFEPKYDAQMSRTRNRPLVRGLVTRRAAVFFAIATAAVGLGLLYFGTNPTVTGLSAANIALYAFVYTPLKRMHVINTWIGAIVGGIPPMMGWVAAAGQGATTGHDTWRDMLFGENSLGGWLLGGILFAWQFPHFNALSHTIREEYKGAGYKMLCWTNPARNARVALRYSVLMFPLSIGLWWAGIVGHGFLVSSTVANGWLTKEAYGFWKHQGANGTARGLFWASIWQLPILLVGALVTKKGLWDGVWGGIFGQPIEDDDDDYVYYEEVSPGKTINQSPTSPSSPVV.

The N-terminal 42 residues, Met1 to Leu42, are a transit peptide targeting the mitochondrion. A compositionally biased stretch (polar residues) spans Thr45–Ser61. The disordered stretch occupies residues Thr45 to Ser131. Residues Pro73–Leu88 are compositionally biased toward low complexity. The span at Asn89–Glu100 shows a compositional bias: polar residues. 8 helical membrane passes run Phe163–Ala183, Leu199–Ile221, Ala247–Thr267, Pro269–Leu289, Thr297–Gly317, Leu337–Leu357, Val390–Leu410, and Gly439–Lys459.

It belongs to the UbiA prenyltransferase family.

It is found in the mitochondrion membrane. The catalysed reaction is heme b + (2E,6E)-farnesyl diphosphate + H2O = Fe(II)-heme o + diphosphate. In terms of biological role, converts protoheme IX and farnesyl diphosphate to heme O. The protein is Protoheme IX farnesyltransferase, mitochondrial (cox10) of Emericella nidulans (strain FGSC A4 / ATCC 38163 / CBS 112.46 / NRRL 194 / M139) (Aspergillus nidulans).